We begin with the raw amino-acid sequence, 338 residues long: 1-aminocyclopropane-1-carboxylate deaminase (338 aa).

Position 51 is an N6-(pyridoxal phosphate)lysine (Lys51). Catalysis depends on Ser78, which acts as the Nucleophile.

Belongs to the ACC deaminase/D-cysteine desulfhydrase family. As to quaternary structure, homotrimer. Pyridoxal 5'-phosphate serves as cofactor.

The catalysed reaction is 1-aminocyclopropane-1-carboxylate + H2O = 2-oxobutanoate + NH4(+). Catalyzes a cyclopropane ring-opening reaction, the irreversible conversion of 1-aminocyclopropane-1-carboxylate (ACC) to ammonia and alpha-ketobutyrate. Allows growth on ACC as a nitrogen source. The protein is 1-aminocyclopropane-1-carboxylate deaminase of Pseudomonas syringae pv. tomato (strain ATCC BAA-871 / DC3000).